The chain runs to 175 residues: Ribosome maturation factor RimM (175 aa).

The PRC barrel domain maps to 98–172 (DGEFHVRDLQ…WLLITPPKGL (75 aa)).

The protein belongs to the RimM family. Binds ribosomal protein uS19.

Its subcellular location is the cytoplasm. In terms of biological role, an accessory protein needed during the final step in the assembly of 30S ribosomal subunit, possibly for assembly of the head region. Essential for efficient processing of 16S rRNA. May be needed both before and after RbfA during the maturation of 16S rRNA. It has affinity for free ribosomal 30S subunits but not for 70S ribosomes. The sequence is that of Ribosome maturation factor RimM from Synechococcus sp. (strain RCC307).